The following is a 99-amino-acid chain: HssA/B-like protein 42 (99 aa).

The interval 1-29 (MTLFSSISSMSTSMSGSKSSISSFGSGTS) is disordered.

This sequence belongs to the hssA/B family.

In Dictyostelium discoideum (Social amoeba), this protein is HssA/B-like protein 42 (hssl42).